Consider the following 404-residue polypeptide: Acetate kinase (404 aa).

A Mg(2+)-binding site is contributed by asparagine 9. Lysine 16 is a binding site for ATP. Residue arginine 100 coordinates substrate. Aspartate 157 serves as the catalytic Proton donor/acceptor. Residues 215–219 (HLGNG), 290–292 (DMR), and 335–339 (GIGEN) contribute to the ATP site. Glutamate 386 is a Mg(2+) binding site.

The protein belongs to the acetokinase family. As to quaternary structure, homodimer. It depends on Mg(2+) as a cofactor. Mn(2+) serves as cofactor.

Its subcellular location is the cytoplasm. The catalysed reaction is acetate + ATP = acetyl phosphate + ADP. The protein operates within metabolic intermediate biosynthesis; acetyl-CoA biosynthesis; acetyl-CoA from acetate: step 1/2. Catalyzes the formation of acetyl phosphate from acetate and ATP. Can also catalyze the reverse reaction. This Methylocella silvestris (strain DSM 15510 / CIP 108128 / LMG 27833 / NCIMB 13906 / BL2) protein is Acetate kinase.